We begin with the raw amino-acid sequence, 124 residues long: Fluoride-specific ion channel FluC (124 aa).

The next 3 membrane-spanning stretches (helical) occupy residues 20 to 40 (LLSI…TLLV), 60 to 80 (ISPE…TTFS), and 102 to 122 (VLLN…LIFS). 2 residues coordinate Na(+): Gly-74 and Thr-77.

The protein belongs to the fluoride channel Fluc/FEX (TC 1.A.43) family.

Its subcellular location is the cell inner membrane. The catalysed reaction is fluoride(in) = fluoride(out). Na(+) is not transported, but it plays an essential structural role and its presence is essential for fluoride channel function. Functionally, fluoride-specific ion channel. Important for reducing fluoride concentration in the cell, thus reducing its toxicity. The chain is Fluoride-specific ion channel FluC from Shewanella frigidimarina (strain NCIMB 400).